The sequence spans 620 residues: MLNKYPLWKYLLILAVLAVGFIYSAPNLYPDDPAVQISGASTALQVTQADVDRAAKALTDAGIAVKADSLSKKGGLIRLVKQDDQLPAKEVVRRTLGDDYVVALNLAQTTPEWLRKLGGSPMKLGLDLSGGVHFLLEVDMDKAVDARLKVYESEVKSLLRKERVRYRSLPIQDRAIQLGFTDSESLDKARSLIAKDFRDFEVVPEERNGLQVLRVALTQAKLAEIREYSIKQNLTTVRNRVNELGVSEPLVQRQGANRIVVELPGVQDTAEAKRILGKTANLEFRLAAEPDALKSATETFEFREPRRPPVPLERGVIITGDQVTDASASFDENGRPQVNIRLDGHGGELMNRATRNNVGRSMAVVFIEQKPVTRYTKQMVDGVEKEVAVPAFKEEKQIISLATIQSPLGNQFRITGLDGPGESSELALLLRAGGLAAPMYFAEERTIGPSLGADNIAKGIDASLWGMLFVSLFIIVIYRFFGVIATVALAFNMVMLVALMSILGATLTLPGIAGIVLTMGMAVDANVLIFSRIREELANGMSVQRAIHEGFNRAFTAILDANLTSLLVGGILYAMGTGPVKGFAVTMSLGIITSMFTAIMVTRAMVNLIFGGRDFKKLWI.

Helical transmembrane passes span 10–30 (YLLI…NLYP), 464–484 (LWGM…FGVI), 488–507 (ALAF…GATL), 511–533 (GIAG…FSRI), 555–575 (FTAI…LYAM), and 582–602 (GFAV…IMVT).

It belongs to the SecD/SecF family. SecD subfamily. Forms a complex with SecF. Part of the essential Sec protein translocation apparatus which comprises SecA, SecYEG and auxiliary proteins SecDF-YajC and YidC.

The protein localises to the cell inner membrane. Its function is as follows. Part of the Sec protein translocase complex. Interacts with the SecYEG preprotein conducting channel. SecDF uses the proton motive force (PMF) to complete protein translocation after the ATP-dependent function of SecA. This chain is Protein translocase subunit SecD, found in Pseudomonas aeruginosa (strain ATCC 15692 / DSM 22644 / CIP 104116 / JCM 14847 / LMG 12228 / 1C / PRS 101 / PAO1).